The chain runs to 222 residues: Uracil-DNA glycosylase (222 aa).

Aspartate 66 serves as the catalytic Proton acceptor.

Belongs to the uracil-DNA glycosylase (UDG) superfamily. UNG family.

The protein localises to the cytoplasm. It catalyses the reaction Hydrolyzes single-stranded DNA or mismatched double-stranded DNA and polynucleotides, releasing free uracil.. In terms of biological role, excises uracil residues from the DNA which can arise as a result of misincorporation of dUMP residues by DNA polymerase or due to deamination of cytosine. The polypeptide is Uracil-DNA glycosylase (Porphyromonas gingivalis (strain ATCC BAA-308 / W83)).